The following is a 501-amino-acid chain: ATP synthase subunit alpha (501 aa).

An ATP-binding site is contributed by 169 to 176; the sequence is GDRQTGKT.

This sequence belongs to the ATPase alpha/beta chains family. F-type ATPases have 2 components, CF(1) - the catalytic core - and CF(0) - the membrane proton channel. CF(1) has five subunits: alpha(3), beta(3), gamma(1), delta(1), epsilon(1). CF(0) has three main subunits: a(1), b(2) and c(9-12). The alpha and beta chains form an alternating ring which encloses part of the gamma chain. CF(1) is attached to CF(0) by a central stalk formed by the gamma and epsilon chains, while a peripheral stalk is formed by the delta and b chains.

The protein resides in the cell membrane. It carries out the reaction ATP + H2O + 4 H(+)(in) = ADP + phosphate + 5 H(+)(out). In terms of biological role, produces ATP from ADP in the presence of a proton gradient across the membrane. The alpha chain is a regulatory subunit. This is ATP synthase subunit alpha from Streptococcus gordonii (strain Challis / ATCC 35105 / BCRC 15272 / CH1 / DL1 / V288).